Reading from the N-terminus, the 217-residue chain is Adenylate kinase (217 aa).

10 to 15 is a binding site for ATP; that stretch reads GAGKGT. The segment at 30–59 is NMP; that stretch reads STGDMLRAAVKAGTEMGLAAKKVMDAGGLV. AMP-binding positions include threonine 31, arginine 36, 57–59, 85–88, and glutamine 92; these read GLV and GFPR. An LID region spans residues 122–159; it reads GRRSHPASGRTYHVKFNPPKVDGVDDVTGEPLVQRDDD. Residues arginine 123 and 132 to 133 each bind ATP; that span reads TY. AMP-binding residues include arginine 156 and arginine 167. Glycine 203 contributes to the ATP binding site.

This sequence belongs to the adenylate kinase family. As to quaternary structure, monomer.

Its subcellular location is the cytoplasm. The catalysed reaction is AMP + ATP = 2 ADP. The protein operates within purine metabolism; AMP biosynthesis via salvage pathway; AMP from ADP: step 1/1. In terms of biological role, catalyzes the reversible transfer of the terminal phosphate group between ATP and AMP. Plays an important role in cellular energy homeostasis and in adenine nucleotide metabolism. The sequence is that of Adenylate kinase from Leptothrix cholodnii (strain ATCC 51168 / LMG 8142 / SP-6) (Leptothrix discophora (strain SP-6)).